Reading from the N-terminus, the 164-residue chain is UPF0114 protein YqhA (164 aa).

3 helical membrane passes run 10–32, 53–75, and 136–155; these read YASR…ALAL, LILV…MVMF, and LMWY…VMGY.

The protein belongs to the UPF0114 family.

It localises to the cell membrane. The protein is UPF0114 protein YqhA of Shigella flexneri.